A 646-amino-acid chain; its full sequence is Protein SENSITIVE TO UV 2 (646 aa).

The segment at 42 to 70 (PAPPPSTKISSSLSHPMQLQSSAGQQRKQ) is disordered. Polar residues predominate over residues 48–70 (TKISSSLSHPMQLQSSAGQQRKQ). Positions 119–126 (NRRCDSEK) match the Nuclear localization signal motif. A coiled-coil region spans residues 123 to 157 (DSEKDLEIDRLKKELERVSKQLLDVEQECSQLKKG). Residues 376-646 (KRTEQDVKQE…VFAFLGDNTI (271 aa)) enclose the Phosphatase tensin-type domain.

The protein belongs to the serpin family. In terms of assembly, forms multimers through the coiled-coil domain. In terms of processing, probably phosphorylated by ATR. Accumulates throughout the root tip.

The protein resides in the nucleus. The protein localises to the cytoplasm. Its function is as follows. Required for tolerance to DNA-damaging and cross-linking agents such as UVB irradiation, gamma-radiation, aphidicolin, ionizing radiation and hydroxyurea (HU), cisplatin (CDDP) and mitomycin C (MMC). Involved in cell-cycle G2/M arrest in response to DNA damage. Required for aluminum-dependent gene regulation and root growth inhibition in an ATR-dependent manner by halting cell cycle progression and triggering loss of the quiescent center (QC). This Arabidopsis thaliana (Mouse-ear cress) protein is Protein SENSITIVE TO UV 2.